The sequence spans 104 residues: Large ribosomal subunit protein uL24 (104 aa).

This sequence belongs to the universal ribosomal protein uL24 family. As to quaternary structure, part of the 50S ribosomal subunit.

One of two assembly initiator proteins, it binds directly to the 5'-end of the 23S rRNA, where it nucleates assembly of the 50S subunit. Functionally, one of the proteins that surrounds the polypeptide exit tunnel on the outside of the subunit. The sequence is that of Large ribosomal subunit protein uL24 from Yersinia pseudotuberculosis serotype O:1b (strain IP 31758).